A 162-amino-acid polypeptide reads, in one-letter code: Endoribonuclease YbeY (162 aa).

His-130, His-134, and His-140 together coordinate Zn(2+).

This sequence belongs to the endoribonuclease YbeY family. Zn(2+) is required as a cofactor.

The protein localises to the cytoplasm. In terms of biological role, single strand-specific metallo-endoribonuclease involved in late-stage 70S ribosome quality control and in maturation of the 3' terminus of the 16S rRNA. This is Endoribonuclease YbeY from Nitratidesulfovibrio vulgaris (strain ATCC 29579 / DSM 644 / CCUG 34227 / NCIMB 8303 / VKM B-1760 / Hildenborough) (Desulfovibrio vulgaris).